Reading from the N-terminus, the 388-residue chain is L-lactate dehydrogenase (388 aa).

The FMN hydroxy acid dehydrogenase domain occupies 1 to 380; it reads MIISAASDYR…SADALSRVTR (380 aa). Residue Y24 participates in substrate binding. S106 and Q127 together coordinate FMN. Y129 lines the substrate pocket. An FMN-binding site is contributed by T155. Residue R164 participates in substrate binding. K251 lines the FMN pocket. H275 (proton acceptor) is an active-site residue. R278 is a binding site for substrate. 306-330 contacts FMN; that stretch reads DSGIRSGLDVVRMLALGADAVLLGR.

This sequence belongs to the FMN-dependent alpha-hydroxy acid dehydrogenase family. The cofactor is FMN.

The protein resides in the cell inner membrane. The enzyme catalyses (S)-lactate + A = pyruvate + AH2. Catalyzes the conversion of L-lactate to pyruvate. Is coupled to the respiratory chain. This is L-lactate dehydrogenase from Xanthomonas axonopodis pv. citri (strain 306).